The chain runs to 145 residues: Bacilliredoxin BH2759 (145 aa).

The protein belongs to the bacilliredoxin family.

The polypeptide is Bacilliredoxin BH2759 (Halalkalibacterium halodurans (strain ATCC BAA-125 / DSM 18197 / FERM 7344 / JCM 9153 / C-125) (Bacillus halodurans)).